The sequence spans 228 residues: Prolactin-2B1 (228 aa).

Residues 1-31 (MLLSLTQMLSSRASSRLFLVSYLLLWENVVS) form the signal peptide. Cystine bridges form between C89-C194 and C203-C228.

Belongs to the somatotropin/prolactin family. Expressed specifically in placenta. Expressed at high levels in trophoblast cells from both junctional and labyrinth zones of the chorioallantoic placenta the last week of gestation.

It is found in the secreted. The sequence is that of Prolactin-2B1 (Prl2b1) from Mus musculus (Mouse).